Here is a 353-residue protein sequence, read N- to C-terminus: Methylthioribose-1-phosphate isomerase (353 aa).

Substrate is bound by residues 51 to 53, arginine 94, and glutamine 203; that span reads RGA. Aspartate 244 functions as the Proton donor in the catalytic mechanism. Residue 254 to 255 participates in substrate binding; the sequence is NK.

The protein belongs to the eIF-2B alpha/beta/delta subunits family. MtnA subfamily.

The catalysed reaction is 5-(methylsulfanyl)-alpha-D-ribose 1-phosphate = 5-(methylsulfanyl)-D-ribulose 1-phosphate. It functions in the pathway amino-acid biosynthesis; L-methionine biosynthesis via salvage pathway; L-methionine from S-methyl-5-thio-alpha-D-ribose 1-phosphate: step 1/6. Functionally, catalyzes the interconversion of methylthioribose-1-phosphate (MTR-1-P) into methylthioribulose-1-phosphate (MTRu-1-P). In Nostoc punctiforme (strain ATCC 29133 / PCC 73102), this protein is Methylthioribose-1-phosphate isomerase.